We begin with the raw amino-acid sequence, 456 residues long: Shufflon protein D' (456 aa).

Residues 1 to 361 are constant region; the sequence is MKKYDRGWAS…TGAILSCQSG (361 aa). A variable region region spans residues 362-456; it reads TWRKSNSGST…KCSYVVACQN (95 aa).

The polypeptide is Shufflon protein D' (Escherichia coli).